Consider the following 209-residue polypeptide: Imidazole glycerol phosphate synthase subunit HisH (209 aa).

Residues 5 to 209 (AIAIIDYDMG…LRNFVALVKD (205 aa)) form the Glutamine amidotransferase type-1 domain. C83 serves as the catalytic Nucleophile. Catalysis depends on residues H188 and E190.

As to quaternary structure, heterodimer of HisH and HisF.

It localises to the cytoplasm. The enzyme catalyses 5-[(5-phospho-1-deoxy-D-ribulos-1-ylimino)methylamino]-1-(5-phospho-beta-D-ribosyl)imidazole-4-carboxamide + L-glutamine = D-erythro-1-(imidazol-4-yl)glycerol 3-phosphate + 5-amino-1-(5-phospho-beta-D-ribosyl)imidazole-4-carboxamide + L-glutamate + H(+). The catalysed reaction is L-glutamine + H2O = L-glutamate + NH4(+). Its pathway is amino-acid biosynthesis; L-histidine biosynthesis; L-histidine from 5-phospho-alpha-D-ribose 1-diphosphate: step 5/9. Functionally, IGPS catalyzes the conversion of PRFAR and glutamine to IGP, AICAR and glutamate. The HisH subunit catalyzes the hydrolysis of glutamine to glutamate and ammonia as part of the synthesis of IGP and AICAR. The resulting ammonia molecule is channeled to the active site of HisF. This is Imidazole glycerol phosphate synthase subunit HisH from Thermosynechococcus vestitus (strain NIES-2133 / IAM M-273 / BP-1).